Here is a 265-residue protein sequence, read N- to C-terminus: 5'-nucleotidase SurE (265 aa).

Residues Asp8, Asp9, Ser39, and Asn96 each contribute to the a divalent metal cation site.

This sequence belongs to the SurE nucleotidase family. It depends on a divalent metal cation as a cofactor.

It is found in the cytoplasm. It carries out the reaction a ribonucleoside 5'-phosphate + H2O = a ribonucleoside + phosphate. Its function is as follows. Nucleotidase that shows phosphatase activity on nucleoside 5'-monophosphates. This is 5'-nucleotidase SurE from Dehalococcoides mccartyi (strain ATCC BAA-2266 / KCTC 15142 / 195) (Dehalococcoides ethenogenes (strain 195)).